The chain runs to 307 residues: Probable deoxyhypusine synthase (307 aa).

Lysine 278 (nucleophile) is an active-site residue.

The protein belongs to the deoxyhypusine synthase family. NAD(+) serves as cofactor.

The catalysed reaction is [eIF5A protein]-L-lysine + spermidine = [eIF5A protein]-deoxyhypusine + propane-1,3-diamine. It participates in protein modification; eIF5A hypusination. In terms of biological role, catalyzes the NAD-dependent oxidative cleavage of spermidine and the subsequent transfer of the butylamine moiety of spermidine to the epsilon-amino group of a specific lysine residue of the eIF-5A precursor protein to form the intermediate deoxyhypusine residue. This is Probable deoxyhypusine synthase (dys) from Methanothermobacter thermautotrophicus (strain ATCC 29096 / DSM 1053 / JCM 10044 / NBRC 100330 / Delta H) (Methanobacterium thermoautotrophicum).